We begin with the raw amino-acid sequence, 447 residues long: Chorismate synthase, chloroplastic (447 aa).

The tract at residues 1–24 (MASSLSTKPFLSGSRRRSTTDGSG) is disordered. A chloroplast-targeting transit peptide spans 1–57 (MASSLSTKPFLSGSRRRSTTDGSGWSYFQTSDLRQLSNQSVQISVRRQTAPLKLVVQ).

This sequence belongs to the chorismate synthase family. Homotetramer. FMNH2 serves as cofactor. The N-terminus is blocked.

The protein resides in the plastid. It is found in the chloroplast. It catalyses the reaction 5-O-(1-carboxyvinyl)-3-phosphoshikimate = chorismate + phosphate. Its pathway is metabolic intermediate biosynthesis; chorismate biosynthesis; chorismate from D-erythrose 4-phosphate and phosphoenolpyruvate: step 7/7. Its function is as follows. Catalyzes the last common step of the biosynthesis of aromatic amino acids, produced via the shikimic acid pathway. This is Chorismate synthase, chloroplastic from Capnoides sempervirens (Rock-harlequin).